The sequence spans 383 residues: D-alanine--D-alanine ligase (383 aa).

One can recognise an ATP-grasp domain in the interval 164–373; that stretch reads KLAFQAAGLE…YSALIDELIT (210 aa). Residue 196–251 coordinates ATP; that stretch reads VAELGFPVFVKPARAGSSFGITRVDEPSQLDAAIATAREHDLKLVVEAGIDGREIE. Mg(2+) is bound by residues D327, E340, and N342.

It belongs to the D-alanine--D-alanine ligase family. It depends on Mg(2+) as a cofactor. Mn(2+) serves as cofactor.

The protein localises to the cytoplasm. It carries out the reaction 2 D-alanine + ATP = D-alanyl-D-alanine + ADP + phosphate + H(+). Its pathway is cell wall biogenesis; peptidoglycan biosynthesis. Cell wall formation. In Kocuria rhizophila (strain ATCC 9341 / DSM 348 / NBRC 103217 / DC2201), this protein is D-alanine--D-alanine ligase.